Here is a 165-residue protein sequence, read N- to C-terminus: 3-isopropylmalate dehydratase small subunit (165 aa).

The protein belongs to the LeuD family. LeuD type 2 subfamily. As to quaternary structure, heterodimer of LeuC and LeuD.

The enzyme catalyses (2R,3S)-3-isopropylmalate = (2S)-2-isopropylmalate. It participates in amino-acid biosynthesis; L-leucine biosynthesis; L-leucine from 3-methyl-2-oxobutanoate: step 2/4. Catalyzes the isomerization between 2-isopropylmalate and 3-isopropylmalate, via the formation of 2-isopropylmaleate. In Desulfovibrio desulfuricans (strain ATCC 27774 / DSM 6949 / MB), this protein is 3-isopropylmalate dehydratase small subunit.